We begin with the raw amino-acid sequence, 126 residues long: MDVIQPCIKIQVHTKYIEEQSNPELQRYVFAYVITIKNLSQQTVQLISRRWLITDSNGKQMTVEGEGVVGQQPFISGSDEYTYSSGTALETPVGVMQGHYILLDEKGNEFITEIDPFRLAIPNVLN.

In terms of domain architecture, ApaG spans 2 to 126; it reads DVIQPCIKIQ…FRLAIPNVLN (125 aa).

The chain is Protein ApaG from Vibrio campbellii (strain ATCC BAA-1116).